The chain runs to 234 residues: tRNA (guanine-N(1)-)-methyltransferase (234 aa).

Position 113 (G113) interacts with S-adenosyl-L-methionine.

This sequence belongs to the RNA methyltransferase TrmD family. In terms of assembly, homodimer.

The protein resides in the cytoplasm. It catalyses the reaction guanosine(37) in tRNA + S-adenosyl-L-methionine = N(1)-methylguanosine(37) in tRNA + S-adenosyl-L-homocysteine + H(+). Specifically methylates guanosine-37 in various tRNAs. This chain is tRNA (guanine-N(1)-)-methyltransferase, found in Gluconobacter oxydans (strain 621H) (Gluconobacter suboxydans).